Reading from the N-terminus, the 713-residue chain is MLCVGRLGGLGARAAALPPRRAGRGILEAGIRARRVSTSWSPVGAAFNVKPQGSRLDLFGERRGLFGVPELSAPEGFHAAQEKALRKAELLVGRACSTPPGPQTVLIFDELSDSLCRVADLADFVKIAHPEPAFREAAEEACRSIGTMVEKLNTNVDLYQSLRKLLADKKLVDSLDPETRRVAELFMFDFEISGIHLDKEKRKRAVDLNVKILDLSSTFLMGANFPNKIEKHLLPEHIRRNFTSAGDHIIIDGLHAESPDDLVREAAYKIFLYPNAGQLKCLEELLSSRDLLAKLVGYSTFSHRALQGTIAKNPETVMQFLEKLSDKLSERTLKDFEMIRGMKMKLNPQNSEVMPWDPPYYSGVIRAERYNIEPSLYCPFFSLGACMEGLNILLNRLLGISLYAEQPAKGEVWSEDVRKLAVVHESEGLLGYIYCDFFQRADKPHQDCHFTIRGGRLKEDGDYQLPVVVLMLNLPRSSRSSPTLLTPGMMENLFHEMGHAMHSMLGRTRYQHVTGTRCPTDFAEVPSILMEYFANDYRVVNQFARHYQTGQPLPKNMVSRLCESKKVCAAADMQLQVFYATLDQIYHGKHPLRNSTTDILKETQEKFYGLPYVPDTAWQLRFSHLVGYGAKYYSYLMSRAVASMVWKECFLQDPFNRAAGERYRREMLAHGGGREPMLMVEGMLQKCPSVDDFVSALVSDLDLDFETFLMDSE.

The transit peptide at 1–35 (MLCVGRLGGLGARAAALPPRRAGRGILEAGIRARR) directs the protein to the mitochondrion. Lysine 126 carries the post-translational modification N6-acetyllysine. Residue histidine 495 participates in Zn(2+) binding. The active site involves glutamate 496. Histidine 499 and histidine 502 together coordinate Zn(2+).

It belongs to the peptidase M3 family. As to quaternary structure, monomer. Zn(2+) is required as a cofactor.

Its subcellular location is the mitochondrion matrix. It catalyses the reaction Release of an N-terminal octapeptide as second stage of processing of some proteins imported into the mitochondrion.. With respect to regulation, activity is divalent cation-dependent. It is stimulated by manganese, magnesium or calcium ions and reversibly inhibited by zinc, cobalt and iron. Cleaves proteins, imported into the mitochondrion, to their mature size. The chain is Mitochondrial intermediate peptidase (MIPEP) from Pongo abelii (Sumatran orangutan).